The primary structure comprises 185 residues: NAD(P)H-dependent FAD/FMN reductase GTNG_3158 (185 aa).

In terms of assembly, anthranilate 3-monooxygenase consists of a reductase component (GTNG_3158) and an oxygenase component HpaH.

The catalysed reaction is FADH2 + NAD(+) = FAD + NADH + 2 H(+). The enzyme catalyses FADH2 + NADP(+) = FAD + NADPH + 2 H(+). Its function is as follows. Involved in the pathway of tryptophan degradation. Reduces FAD/FMN to FADH(2)/FMNH(2), which are subsequently used for the hydroxylation of anthranilate. It can reduce either FAD or flavin mononucleotide (FMN) but prefers FAD. The enzyme has a slight preference for NADPH as acceptor. This Geobacillus thermodenitrificans (strain NG80-2) protein is NAD(P)H-dependent FAD/FMN reductase GTNG_3158.